A 201-amino-acid chain; its full sequence is Glutathione peroxidase 1 (201 aa).

2 positions are modified to phosphoserine: serine 7 and serine 32. Selenocysteine 47 is a catalytic residue. Position 47 (selenocysteine 47) is a non-standard amino acid, selenocysteine. Lysine 62, lysine 86, and lysine 112 each carry N6-acetyllysine; alternate. 3 positions are modified to N6-succinyllysine; alternate: lysine 62, lysine 86, and lysine 112. Lysine 119 carries the post-translational modification N6-acetyllysine. Position 146 is an N6-acetyllysine; alternate (lysine 146). Position 146 is an N6-succinyllysine; alternate (lysine 146). Position 195 is a phosphoserine (serine 195).

This sequence belongs to the glutathione peroxidase family. As to quaternary structure, homotetramer. Interacts with MIEN1. Post-translationally, during periods of oxidative stress, Sec-47 may react with a superoxide radical, irreversibly lose hydroselenide and be converted to dehydroalanine. As to expression, expressed in liver, kidney, lung, brain and heart.

It localises to the cytoplasm. The protein localises to the mitochondrion. It catalyses the reaction 2 glutathione + H2O2 = glutathione disulfide + 2 H2O. The catalysed reaction is a hydroperoxy polyunsaturated fatty acid + 2 glutathione = a hydroxy polyunsaturated fatty acid + glutathione disulfide + H2O. The enzyme catalyses tert-butyl hydroperoxide + 2 glutathione = tert-butanol + glutathione disulfide + H2O. It carries out the reaction cumene hydroperoxide + 2 glutathione = 2-phenylpropan-2-ol + glutathione disulfide + H2O. It catalyses the reaction (13S)-hydroperoxy-(9Z,11E)-octadecadienoate + 2 glutathione = (13S)-hydroxy-(9Z,11E)-octadecadienoate + glutathione disulfide + H2O. The catalysed reaction is (9S)-hydroperoxy-(10E,12Z)-octadecadienoate + 2 glutathione = (9S)-hydroxy-(10E,12Z)-octadecadienoate + glutathione disulfide + H2O. The enzyme catalyses (5S)-hydroperoxy-(6E,8Z,11Z,14Z)-eicosatetraenoate + 2 glutathione = (5S)-hydroxy-(6E,8Z,11Z,14Z)-eicosatetraenoate + glutathione disulfide + H2O. It carries out the reaction (12S)-hydroperoxy-(5Z,8Z,10E,14Z)-eicosatetraenoate + 2 glutathione = (12S)-hydroxy-(5Z,8Z,10E,14Z)-eicosatetraenoate + glutathione disulfide + H2O. It catalyses the reaction (12R)-hydroperoxy-(5Z,8Z,10E,14Z)-eicosatetraenoate + 2 glutathione = (12R)-hydroxy-(5Z,8Z,10E,14Z)-eicosatetraenoate + glutathione disulfide + H2O. The catalysed reaction is (15S)-hydroperoxy-(5Z,8Z,11Z,13E)-eicosatetraenoate + 2 glutathione = (15S)-hydroxy-(5Z,8Z,11Z,13E)-eicosatetraenoate + glutathione disulfide + H2O. The enzyme catalyses (5S)-hydroperoxy-(6E,8Z,11Z,14Z,17Z)-eicosapentaenoate + 2 glutathione = (5S)-hydroxy-(6E,8Z,11Z,14Z,17Z)-eicosapentaenoate + glutathione disulfide + H2O. It carries out the reaction (12S)-hydroperoxy-(5Z,8Z,10E,14Z,17Z)-eicosapentaenoate + 2 glutathione = (12S)-hydroxy-(5Z,8Z,10E,14Z,17Z)-eicosapentaenoate + glutathione disulfide + H2O. It catalyses the reaction (15S)-hydroperoxy-(5Z,8Z,11Z,13E,17Z)-eicosapentaenoate + 2 glutathione = (15S)-hydroxy-(5Z,8Z,11Z,13E,17Z)-eicosapentaenoate + glutathione disulfide + H2O. The catalysed reaction is (15S)-hydroperoxy-(11Z,13E)-eicosadienoate + 2 glutathione = (15S)-hydroxy-(11Z,13E)-eicosadienoate + glutathione disulfide + H2O. The enzyme catalyses (17S)-hydroperoxy-(4Z,7Z,10Z,13Z,15E,19Z)-docosahexaenoate + 2 glutathione = (17S)-hydroxy-(4Z,7Z,10Z,13Z,15E,19Z)-docosahexaenoate + glutathione disulfide + H2O. Functionally, catalyzes the reduction of hydroperoxides in a glutathione-dependent manner thus regulating cellular redox homeostasis. Can reduce small soluble hydroperoxides such as H2O2, cumene hydroperoxide and tert-butyl hydroperoxide, as well as several fatty acid-derived hydroperoxides. In platelets catalyzes the reduction of 12-hydroperoxyeicosatetraenoic acid, the primary product of the arachidonate 12-lipoxygenase pathway. This Mus musculus (Mouse) protein is Glutathione peroxidase 1.